Here is a 159-residue protein sequence, read N- to C-terminus: MKIKLICVGKLKEAYLRDGIAEYQKRLSRFCQCDIIELADEKTPDKASHAEKQQIMAKEADRIKKKLGQRDFVIALAIEGKQLASEQFSHLLSEVTVKGYSDIAFVIGGSLGLDQSIKNRANLLMSFGLLTLPHQLMRLVLIEQVYRAFMIQQGSPYHK.

S-adenosyl-L-methionine-binding positions include L76, G108, and 127–132; that span reads FGLLTL.

This sequence belongs to the RNA methyltransferase RlmH family. Homodimer.

It is found in the cytoplasm. It catalyses the reaction pseudouridine(1915) in 23S rRNA + S-adenosyl-L-methionine = N(3)-methylpseudouridine(1915) in 23S rRNA + S-adenosyl-L-homocysteine + H(+). Its function is as follows. Specifically methylates the pseudouridine at position 1915 (m3Psi1915) in 23S rRNA. This is Ribosomal RNA large subunit methyltransferase H from Streptococcus equi subsp. zooepidemicus (strain H70).